Here is a 146-residue protein sequence, read N- to C-terminus: Hemoglobin subunit beta-1 (146 aa).

One can recognise a Globin domain in the interval 2–146 (GLTAHDRQLI…IADALGKGYH (145 aa)). Positions 63 and 92 each coordinate heme b.

The protein belongs to the globin family. As to quaternary structure, heterotetramer of two alpha chains and two beta chains. As to expression, red blood cells.

Involved in oxygen transport from the lung to the various peripheral tissues. The polypeptide is Hemoglobin subunit beta-1 (hbb1) (Xenopus borealis (Kenyan clawed frog)).